We begin with the raw amino-acid sequence, 146 residues long: Large ribosomal subunit protein uL15 (146 aa).

A disordered region spans residues 1–46 (MKLHELQPAPGSRKKAVRVGRGIGSGNGKTAGRGHKGQKARSGGGV). Gly residues predominate over residues 21–31 (RGIGSGNGKTA).

Belongs to the universal ribosomal protein uL15 family. In terms of assembly, part of the 50S ribosomal subunit.

Functionally, binds to the 23S rRNA. The chain is Large ribosomal subunit protein uL15 from Geobacillus thermodenitrificans (strain NG80-2).